Here is a 229-residue protein sequence, read N- to C-terminus: Uracil-DNA glycosylase (229 aa).

The active-site Proton acceptor is the D64.

The protein belongs to the uracil-DNA glycosylase (UDG) superfamily. UNG family.

Its subcellular location is the cytoplasm. The catalysed reaction is Hydrolyzes single-stranded DNA or mismatched double-stranded DNA and polynucleotides, releasing free uracil.. In terms of biological role, excises uracil residues from the DNA which can arise as a result of misincorporation of dUMP residues by DNA polymerase or due to deamination of cytosine. The sequence is that of Uracil-DNA glycosylase from Geobacillus thermodenitrificans (strain NG80-2).